A 176-amino-acid chain; its full sequence is MNAEKDSPLPKPQWVYRVGIGQDSHRFLSESSAKPCILAGVIFENSPGFQANSDGDIVFHAICNAISSVTHRIILGDVADELFHTRGITDSSIYLSEAIKSLKPNQLISHVAITIEGNRPKFLPKLSAMRQSIASALNISLGSVGITATSGEGLSDFGCGDGVQCFCVLTVMEYCG.

Asp-23, His-25, and His-60 together coordinate a divalent metal cation. 23 to 25 contributes to the 4-CDP-2-C-methyl-D-erythritol 2-phosphate binding site; the sequence is DSH. 149–152 contacts 4-CDP-2-C-methyl-D-erythritol 2-phosphate; it reads TSGE.

Belongs to the IspF family. As to quaternary structure, homotrimer. A divalent metal cation serves as cofactor.

It carries out the reaction 4-CDP-2-C-methyl-D-erythritol 2-phosphate = 2-C-methyl-D-erythritol 2,4-cyclic diphosphate + CMP. It participates in isoprenoid biosynthesis; isopentenyl diphosphate biosynthesis via DXP pathway; isopentenyl diphosphate from 1-deoxy-D-xylulose 5-phosphate: step 4/6. In terms of biological role, involved in the biosynthesis of isopentenyl diphosphate (IPP) and dimethylallyl diphosphate (DMAPP), two major building blocks of isoprenoid compounds. Catalyzes the conversion of 4-diphosphocytidyl-2-C-methyl-D-erythritol 2-phosphate (CDP-ME2P) to 2-C-methyl-D-erythritol 2,4-cyclodiphosphate (ME-CPP) with a corresponding release of cytidine 5-monophosphate (CMP). This Chlamydia felis (strain Fe/C-56) (Chlamydophila felis) protein is 2-C-methyl-D-erythritol 2,4-cyclodiphosphate synthase.